A 241-amino-acid chain; its full sequence is Endodeoxyribonuclease NucC (241 aa).

Active-site residues include Asp-73, Glu-104, and Lys-106. Residues Asp-73 and Glu-104 each contribute to the Mg(2+) site.

This sequence belongs to the NucC endonuclease family. As to quaternary structure, self-oligomerizes. Forms homotrimers; in the presence of cAAA the trimers associate face-to-face to form homohexamers. The 2 cAAA-binding sites are on the exterior of the hexamer at the three-way junction, there are maximally 2 cyclic nucleotides per hexamer. Mg(2+) serves as cofactor.

Activated by cAAA and to a lesser extent cAA and cAAG; cAAA and cAA are products of its cognate CD-NTase. Cyclic nucleotide binding causes hexamerization. Cyclic nucleotide binding causes a series of shifts that enclose the cAAA molecule, enable hexamer formation and juxtapose pairs of active sites to allow dsDNA cleavage. Functionally, effector DNase of a CBASS antivirus system. CBASS (cyclic oligonucleotide-based antiphage signaling system) provides immunity against bacteriophage. The CD-NTase protein synthesizes cyclic nucleotides in response to infection; these serve as specific second messenger signals. The signals activate a diverse range of effectors, leading to bacterial cell death and thus abortive phage infection. A type III-C(AAA) CBASS system. Its function is as follows. A cyclic nucleotide-activated dsDNase. In the presence of 3',3',3'-cyclic AMP-AMP-AMP (cAAA), and to a lesser extent 3',3',3'-cyclic AMP-AMP-GMP (cAAG) and cyclic-di-AMP (c-di-AMP), endonucleolytically degrades dsDNA. Binds one cAAA in a pocket on one surface of the trimer; cAAA binding promotes hexamerization, which is necessary for nuclease activation. Also binds c-diAMP or linear di-AMP with lower affinity. The nuclease digests dsDNA to about 50 bp lengths with a 2-base 3' overhang and a consensus recognition site of 5'-Axx|T-3'. DNA has been modeled to contact a pair of juxtaposed active sites (one from each layer of the hexamer), accounting for cleavage on both strands and the 2-base overhang. In terms of biological role, protects E.coli strain JP313 against bacteriophage lambda cI- infection. When the cdnC-cap7-cap6-nucC operon is transformed into a susceptible strain it confers bacteriophage immunity. Mutations in the sensor (Cap7 also called HORMA) or effector proteins (CdnC, NucC) but not the disassembly protein (Cap6 also called Trip13) no longer confer immunity. The presence of the intact operon leads to culture collapse and cell death which occurs before the phage has finished its replication cycle, thus protecting non-infected bacteria by aborting the phage infection and preventing its propagation. This chain is Endodeoxyribonuclease NucC, found in Escherichia coli (strain MS 115-1).